The sequence spans 206 residues: Large ribosomal subunit protein uL3 (206 aa).

The protein belongs to the universal ribosomal protein uL3 family. As to quaternary structure, part of the 50S ribosomal subunit. Forms a cluster with proteins L14 and L19.

Functionally, one of the primary rRNA binding proteins, it binds directly near the 3'-end of the 23S rRNA, where it nucleates assembly of the 50S subunit. The polypeptide is Large ribosomal subunit protein uL3 (Cytophaga hutchinsonii (strain ATCC 33406 / DSM 1761 / CIP 103989 / NBRC 15051 / NCIMB 9469 / D465)).